Here is a 258-residue protein sequence, read N- to C-terminus: Type III pantothenate kinase (258 aa).

Position 6-13 (6-13) interacts with ATP; it reads DVGNTNTV. Substrate is bound by residues Tyr100 and 107-110; that span reads GADR. Asp109 serves as the catalytic Proton acceptor. A K(+)-binding site is contributed by Asp129. Position 132 (Thr132) interacts with ATP. Substrate is bound at residue Thr184.

Belongs to the type III pantothenate kinase family. As to quaternary structure, homodimer. NH4(+) is required as a cofactor. The cofactor is K(+).

The protein localises to the cytoplasm. It catalyses the reaction (R)-pantothenate + ATP = (R)-4'-phosphopantothenate + ADP + H(+). The protein operates within cofactor biosynthesis; coenzyme A biosynthesis; CoA from (R)-pantothenate: step 1/5. Its activity is regulated as follows. Not regulated by feedback inhibition by CoA and its thioesters as described for many other pantothenate kinases. Not inhibited by N-pentylpantothenamide (N5-Pan), and this compound cannot act as a substrate either. Its function is as follows. Catalyzes the phosphorylation of pantothenate (Pan), the first step in CoA biosynthesis. Cannot utilize a phosphoryl donor other than ATP. The chain is Type III pantothenate kinase (coaX) from Bacillus subtilis (strain 168).